Here is a 156-residue protein sequence, read N- to C-terminus: Small ribosomal subunit protein uS7 (156 aa).

Belongs to the universal ribosomal protein uS7 family. In terms of assembly, part of the 30S ribosomal subunit. Contacts proteins S9 and S11.

Functionally, one of the primary rRNA binding proteins, it binds directly to 16S rRNA where it nucleates assembly of the head domain of the 30S subunit. Is located at the subunit interface close to the decoding center, probably blocks exit of the E-site tRNA. In Synechococcus sp. (strain CC9605), this protein is Small ribosomal subunit protein uS7.